The following is a 318-amino-acid chain: tRNA-cytidine(32) 2-sulfurtransferase (318 aa).

A PP-loop motif motif is present at residues 65–70 (SGGKDS). [4Fe-4S] cluster is bound by residues Cys140, Cys143, and Cys231.

This sequence belongs to the TtcA family. In terms of assembly, homodimer. Requires Mg(2+) as cofactor. It depends on [4Fe-4S] cluster as a cofactor.

The protein localises to the cytoplasm. The enzyme catalyses cytidine(32) in tRNA + S-sulfanyl-L-cysteinyl-[cysteine desulfurase] + AH2 + ATP = 2-thiocytidine(32) in tRNA + L-cysteinyl-[cysteine desulfurase] + A + AMP + diphosphate + H(+). Its pathway is tRNA modification. Its function is as follows. Catalyzes the ATP-dependent 2-thiolation of cytidine in position 32 of tRNA, to form 2-thiocytidine (s(2)C32). The sulfur atoms are provided by the cysteine/cysteine desulfurase (IscS) system. The polypeptide is tRNA-cytidine(32) 2-sulfurtransferase (Herminiimonas arsenicoxydans).